The sequence spans 451 residues: Secreted RxLR effector protein 70 (451 aa).

A signal peptide spans 1–17 (MRGAYYIITALLVVASS). Positions 48 to 65 (RFLRESRDVHDDLANEER) match the RxLR-dEER motif. The segment at 303-336 (DAPSNSKHTLGGNKDSSSATTLHKHSKGLSSRPF) is disordered. Polar residues predominate over residues 305–323 (PSNSKHTLGGNKDSSSATT).

This sequence belongs to the RxLR effector family.

It is found in the secreted. The protein resides in the host nucleus. Functionally, secreted effector that completely suppresses the host cell death induced by cell death-inducing proteins. In Plasmopara viticola (Downy mildew of grapevine), this protein is Secreted RxLR effector protein 70.